A 597-amino-acid chain; its full sequence is Aspartate--tRNA ligase (597 aa).

E173 contacts L-aspartate. The tract at residues 197–200 (QLFK) is aspartate. L-aspartate is bound at residue R219. ATP is bound by residues 219-221 (RDE) and Q228. Residue H449 participates in L-aspartate binding. An ATP-binding site is contributed by E483. R490 provides a ligand contact to L-aspartate. 535-538 (GLDR) is an ATP binding site.

This sequence belongs to the class-II aminoacyl-tRNA synthetase family. Type 1 subfamily. As to quaternary structure, homodimer.

The protein localises to the cytoplasm. It catalyses the reaction tRNA(Asp) + L-aspartate + ATP = L-aspartyl-tRNA(Asp) + AMP + diphosphate. Functionally, catalyzes the attachment of L-aspartate to tRNA(Asp) in a two-step reaction: L-aspartate is first activated by ATP to form Asp-AMP and then transferred to the acceptor end of tRNA(Asp). This chain is Aspartate--tRNA ligase, found in Shewanella pealeana (strain ATCC 700345 / ANG-SQ1).